A 394-amino-acid polypeptide reads, in one-letter code: Succinate--CoA ligase [ADP-forming] subunit beta 1 (394 aa).

In terms of domain architecture, ATP-grasp spans 9-237; that stretch reads RDLFAKHDVP…KAAANPLEAA (229 aa). ATP is bound by residues lysine 45, 52-54, glutamate 92, proline 95, and glutamate 100; that span reads GRG. Residues asparagine 192 and aspartate 206 each contribute to the Mg(2+) site. Substrate contacts are provided by residues asparagine 257 and 319–321; that span reads GIT.

The protein belongs to the succinate/malate CoA ligase beta subunit family. Heterotetramer of two alpha and two beta subunits. Mg(2+) is required as a cofactor.

The enzyme catalyses succinate + ATP + CoA = succinyl-CoA + ADP + phosphate. It catalyses the reaction GTP + succinate + CoA = succinyl-CoA + GDP + phosphate. Its pathway is carbohydrate metabolism; tricarboxylic acid cycle; succinate from succinyl-CoA (ligase route): step 1/1. Succinyl-CoA synthetase functions in the citric acid cycle (TCA), coupling the hydrolysis of succinyl-CoA to the synthesis of either ATP or GTP and thus represents the only step of substrate-level phosphorylation in the TCA. The beta subunit provides nucleotide specificity of the enzyme and binds the substrate succinate, while the binding sites for coenzyme A and phosphate are found in the alpha subunit. The sequence is that of Succinate--CoA ligase [ADP-forming] subunit beta 1 from Streptomyces coelicolor (strain ATCC BAA-471 / A3(2) / M145).